The sequence spans 175 residues: Albumin-1 (175 aa).

Cysteines 135 and 141 form a disulfide.

Belongs to the protease inhibitor I3 (leguminous Kunitz-type inhibitor) family.

In terms of biological role, 2S seed storage protein. In Psophocarpus tetragonolobus (Winged bean), this protein is Albumin-1.